The sequence spans 396 residues: Argininosuccinate synthase (396 aa).

ATP is bound at residue 9-17 (AYSGGLDTS). Tyrosine 85 provides a ligand contact to L-citrulline. Residue glycine 115 coordinates ATP. 3 residues coordinate L-aspartate: threonine 117, asparagine 121, and aspartate 122. Asparagine 121 serves as a coordination point for L-citrulline. Residues arginine 125, serine 173, glutamate 258, and tyrosine 270 each contribute to the L-citrulline site.

This sequence belongs to the argininosuccinate synthase family. Type 1 subfamily. Homotetramer.

The protein resides in the cytoplasm. It carries out the reaction L-citrulline + L-aspartate + ATP = 2-(N(omega)-L-arginino)succinate + AMP + diphosphate + H(+). The protein operates within amino-acid biosynthesis; L-arginine biosynthesis; L-arginine from L-ornithine and carbamoyl phosphate: step 2/3. This is Argininosuccinate synthase from Streptococcus mutans serotype c (strain ATCC 700610 / UA159).